The sequence spans 108 residues: Guanine nucleotide-binding protein subunit gamma (108 aa).

Cysteine 104 is lipidated: S-palmitoyl cysteine. A Cysteine methyl ester modification is found at cysteine 105. The S-farnesyl cysteine moiety is linked to residue cysteine 105. A propeptide spans 106–108 (VIS) (removed in mature form).

Belongs to the G protein gamma family. As to quaternary structure, g proteins are composed of 3 units, alpha, beta and gamma.

The protein localises to the membrane. The protein is Guanine nucleotide-binding protein subunit gamma of Yarrowia lipolytica (strain CLIB 122 / E 150) (Yeast).